The primary structure comprises 203 residues: Dual specificity phosphatase 29 (203 aa).

In terms of domain architecture, Tyrosine-protein phosphatase spans 47 to 193 (HVNQVWPRIY…LRALDIALQE (147 aa)). Position 137–144 (137–144 (HCVMGRSR)) interacts with substrate. Catalysis depends on Cys-138, which acts as the Phosphocysteine intermediate.

This sequence belongs to the protein-tyrosine phosphatase family. Non-receptor class dual specificity subfamily.

It localises to the cytoplasm. Its subcellular location is the nucleus. It carries out the reaction O-phospho-L-tyrosyl-[protein] + H2O = L-tyrosyl-[protein] + phosphate. The catalysed reaction is O-phospho-L-seryl-[protein] + H2O = L-seryl-[protein] + phosphate. The enzyme catalyses O-phospho-L-threonyl-[protein] + H2O = L-threonyl-[protein] + phosphate. Dual specificity phosphatase able to dephosphorylate phosphotyrosine, phosphoserine and phosphothreonine residues within the same substrate, with a preference for phosphotyrosine as a substrate. Involved in the modulation of AMPK and MAPK1/2 signaling pathways. The sequence is that of Dual specificity phosphatase 29 (dusp29) from Oryzias latipes (Japanese rice fish).